A 457-amino-acid polypeptide reads, in one-letter code: Multidrug resistance protein MdtK (457 aa).

At 1 to 10 the chain is on the cytoplasmic side; that stretch reads MQKYISEARL. The helical transmembrane segment at 11–31 threads the bilayer; sequence LLALAIPVILAQIAQTAMGFV. Topologically, residues 32–52 are extracellular; the sequence is DTVMAGGYSATDMAAVAIGTS. The helical transmembrane segment at 53-73 threads the bilayer; it reads IWLPAILFGHGLLLALTPVIA. The Cytoplasmic portion of the chain corresponds to 74–92; it reads QLNGSGRRERIAHQVRQGF. A helical transmembrane segment spans residues 93–113; the sequence is WLAGFVSVLIMLVLWNAGYII. The Extracellular portion of the chain corresponds to 114–126; that stretch reads RYMENIDPALADK. The helical transmembrane segment at 127–147 threads the bilayer; it reads AVGYLRALLWGAPGYLFFQVA. Over 148-159 the chain is Cytoplasmic; sequence RNQCEGLAKTKP. Residues 160-180 traverse the membrane as a helical segment; that stretch reads GMVMGFIGLLVNIPVNYIFIY. Residues 181-188 are Extracellular-facing; it reads GHFGMPEL. Residues 189–209 traverse the membrane as a helical segment; the sequence is GGVGCGVATAAVYWVMFLAMV. The Cytoplasmic segment spans residues 210-242; sequence SYIKRARSMRDIRNEKGTAKPEPAVMKRLIQLG. A helical transmembrane segment spans residues 243–263; the sequence is LPIALALFFEVTLFAVVALLV. The Extracellular segment spans residues 264-275; sequence SPLGIVDVAGHQ. The chain crosses the membrane as a helical span at residues 276–296; that stretch reads IALNFSSLMFVLPMSLAAAVT. Residues 297–313 are Cytoplasmic-facing; it reads IRVGYRLGQGSTLDAQT. The helical transmembrane segment at 314-334 threads the bilayer; that stretch reads AARTGLMVGVCMATLTAIFTV. At 335-349 the chain is on the extracellular side; sequence SLREQIALLYNDNPE. The chain crosses the membrane as a helical span at residues 350–370; that stretch reads VVTLAAHLMLLAAVYQISDSI. At 371-386 the chain is on the cytoplasmic side; the sequence is QVIGSGILRGYKDTRS. The helical transmembrane segment at 387–407 threads the bilayer; the sequence is IFYITFTAYWVLGLPSGYILA. Over 408-417 the chain is Extracellular; that stretch reads LTDLVVEPMG. The chain crosses the membrane as a helical span at residues 418-438; the sequence is PAGFWIGFIIGLTSAAIMMML. The Cytoplasmic segment spans residues 439-457; the sequence is RMRFLQRMPSAIILQRASR.

It belongs to the multi antimicrobial extrusion (MATE) (TC 2.A.66.1) family. MdtK subfamily.

The protein localises to the cell inner membrane. Its function is as follows. Multidrug efflux pump that functions probably as a Na(+)/drug antiporter. The chain is Multidrug resistance protein MdtK (mdtK) from Shigella flexneri.